The chain runs to 485 residues: Glutamyl-tRNA(Gln) amidotransferase subunit A (485 aa).

Catalysis depends on charge relay system residues Lys-79 and Ser-154. Ser-178 functions as the Acyl-ester intermediate in the catalytic mechanism.

Belongs to the amidase family. GatA subfamily. In terms of assembly, heterotrimer of A, B and C subunits.

The catalysed reaction is L-glutamyl-tRNA(Gln) + L-glutamine + ATP + H2O = L-glutaminyl-tRNA(Gln) + L-glutamate + ADP + phosphate + H(+). Its function is as follows. Allows the formation of correctly charged Gln-tRNA(Gln) through the transamidation of misacylated Glu-tRNA(Gln) in organisms which lack glutaminyl-tRNA synthetase. The reaction takes place in the presence of glutamine and ATP through an activated gamma-phospho-Glu-tRNA(Gln). In Staphylococcus aureus (strain USA300 / TCH1516), this protein is Glutamyl-tRNA(Gln) amidotransferase subunit A.